We begin with the raw amino-acid sequence, 205 residues long: Holliday junction branch migration complex subunit RuvA (205 aa).

Residues Met1–Ile64 form a domain I region. Positions Thr65–Glu143 are domain II. The tract at residues Arg144–Pro156 is flexible linker. The tract at residues Val157 to Leu205 is domain III.

This sequence belongs to the RuvA family. In terms of assembly, homotetramer. Forms an RuvA(8)-RuvB(12)-Holliday junction (HJ) complex. HJ DNA is sandwiched between 2 RuvA tetramers; dsDNA enters through RuvA and exits via RuvB. An RuvB hexamer assembles on each DNA strand where it exits the tetramer. Each RuvB hexamer is contacted by two RuvA subunits (via domain III) on 2 adjacent RuvB subunits; this complex drives branch migration. In the full resolvosome a probable DNA-RuvA(4)-RuvB(12)-RuvC(2) complex forms which resolves the HJ.

The protein resides in the cytoplasm. The RuvA-RuvB-RuvC complex processes Holliday junction (HJ) DNA during genetic recombination and DNA repair, while the RuvA-RuvB complex plays an important role in the rescue of blocked DNA replication forks via replication fork reversal (RFR). RuvA specifically binds to HJ cruciform DNA, conferring on it an open structure. The RuvB hexamer acts as an ATP-dependent pump, pulling dsDNA into and through the RuvAB complex. HJ branch migration allows RuvC to scan DNA until it finds its consensus sequence, where it cleaves and resolves the cruciform DNA. This chain is Holliday junction branch migration complex subunit RuvA, found in Shewanella woodyi (strain ATCC 51908 / MS32).